An 830-amino-acid polypeptide reads, in one-letter code: AdoMet-dependent rRNA methyltransferase SPB1 (830 aa).

Residues G58, W60, D78, D94, and D119 each contribute to the S-adenosyl-L-methionine site. The Proton acceptor role is filled by K159. A coiled-coil region spans residues 345 to 388 (LTEEEQIEKELQEMQQKQNLKKKREKRKQNEIKQKEITRMQMQM). Disordered stretches follow at residues 485-529 (AKEA…SDSD) and 565-642 (EADL…AREV). 3 stretches are compositionally biased toward acidic residues: residues 516–529 (VDDDDSDVSDSDSD), 591–610 (VSEESSSDEEEAEEESDSDF), and 618–630 (DESDDDYDSEDEA). Over residues 631-642 (ERSQKEKHAREV) the composition is skewed to basic and acidic residues.

The protein belongs to the class I-like SAM-binding methyltransferase superfamily. RNA methyltransferase RlmE family. SPB1 subfamily. In terms of assembly, component of the nucleolar and nucleoplasmic pre-60S ribosomal particle.

It is found in the nucleus. The protein localises to the nucleolus. The catalysed reaction is a ribonucleotide in rRNA + S-adenosyl-L-methionine = a 2'-O-methylribonucleotide in rRNA + S-adenosyl-L-homocysteine + H(+). In terms of biological role, required for proper assembly of pre-ribosomal particles during the biogenesis of the 60S ribosomal subunit. This chain is AdoMet-dependent rRNA methyltransferase SPB1, found in Eremothecium gossypii (strain ATCC 10895 / CBS 109.51 / FGSC 9923 / NRRL Y-1056) (Yeast).